The sequence spans 350 residues: Probable dual-specificity RNA methyltransferase RlmN (350 aa).

Residues 105–342 (ANGKNSVCIS…VRQSKGANIN (238 aa)) enclose the Radical SAM core domain. A disulfide bond links Cys112 and Cys345. [4Fe-4S] cluster-binding residues include Cys119, Cys123, and Cys126. S-adenosyl-L-methionine contacts are provided by residues 166–167 (GE), Ser198, 221–223 (SLH), and Asn302. The active-site S-methylcysteine intermediate is the Cys345.

It belongs to the radical SAM superfamily. RlmN family. Requires [4Fe-4S] cluster as cofactor.

The protein resides in the cytoplasm. The enzyme catalyses adenosine(2503) in 23S rRNA + 2 reduced [2Fe-2S]-[ferredoxin] + 2 S-adenosyl-L-methionine = 2-methyladenosine(2503) in 23S rRNA + 5'-deoxyadenosine + L-methionine + 2 oxidized [2Fe-2S]-[ferredoxin] + S-adenosyl-L-homocysteine. The catalysed reaction is adenosine(37) in tRNA + 2 reduced [2Fe-2S]-[ferredoxin] + 2 S-adenosyl-L-methionine = 2-methyladenosine(37) in tRNA + 5'-deoxyadenosine + L-methionine + 2 oxidized [2Fe-2S]-[ferredoxin] + S-adenosyl-L-homocysteine. Functionally, specifically methylates position 2 of adenine 2503 in 23S rRNA and position 2 of adenine 37 in tRNAs. The chain is Probable dual-specificity RNA methyltransferase RlmN from Endomicrobium trichonymphae.